A 471-amino-acid polypeptide reads, in one-letter code: Heat shock 70 kDa protein 13 (471 aa).

The signal sequence occupies residues 1–22; that stretch reads MAGEMTILGSAVLTLLLAGYLA. A glycan (N-linked (GlcNAc...) asparagine) is linked at asparagine 184. Residues 316-339 form a disordered region; it reads NDSQKPQNADSKLPEDQLTPGDGH.

This sequence belongs to the heat shock protein 70 family. Binds UBQLN2.

The protein resides in the microsome. It is found in the endoplasmic reticulum. Has peptide-independent ATPase activity. This Rattus norvegicus (Rat) protein is Heat shock 70 kDa protein 13 (Hspa13).